Consider the following 309-residue polypeptide: Protoheme IX farnesyltransferase (309 aa).

A run of 9 helical transmembrane segments spans residues 35-55 (IGIV…ALYF), 64-84 (LHIV…SCSI), 114-134 (VLWL…MTTV), 135-155 (TAAI…TMWS), 161-181 (LNTV…WTAV), 187-207 (VVPL…FLAL), 236-256 (IVVW…LGVP), 257-277 (FLTV…YGFK), and 289-309 (FIYS…ATLW).

It belongs to the UbiA prenyltransferase family. Protoheme IX farnesyltransferase subfamily. Interacts with CtaA.

The protein localises to the cell membrane. The enzyme catalyses heme b + (2E,6E)-farnesyl diphosphate + H2O = Fe(II)-heme o + diphosphate. The protein operates within porphyrin-containing compound metabolism; heme O biosynthesis; heme O from protoheme: step 1/1. Functionally, converts heme B (protoheme IX) to heme O by substitution of the vinyl group on carbon 2 of heme B porphyrin ring with a hydroxyethyl farnesyl side group. This Geobacillus sp. (strain WCH70) protein is Protoheme IX farnesyltransferase.